The following is a 154-amino-acid chain: ORF3b protein (154 aa).

The interval 80 to 138 (LQTLVLKMLHSSSLTSLLKTHRMCKYTQSTALQELLIQQWIQFMMSRRRLLACLCKHKK) is mitochondrial targeting signal. The interval 134 to 154 (CKHKKVSTNLCTHSFRKKQVR) is nucleolar targeting. Positions 135–153 (KHKKVSTNLCTHSFRKKQV) match the Bipartite nuclear localization signal motif.

As to quaternary structure, interacts with host RUNX1 isoform b.

Its subcellular location is the host nucleus. It is found in the host nucleolus. The protein localises to the host mitochondrion. Functionally, induces host cell G0/G1 arrest and apoptosis. In Homo sapiens (Human), this protein is ORF3b protein.